The chain runs to 45 residues: Mu-conotoxin-like Cal 12.1.2a (45 aa).

Cystine bridges form between cysteine 3/cysteine 16, cysteine 11/cysteine 28, cysteine 18/cysteine 33, and cysteine 27/cysteine 39. Proline 23 is modified (4-hydroxyproline). A 6'-bromotryptophan mark is found at tryptophan 37 and tryptophan 38. Position 40 is a 4-hydroxyproline (proline 40). Residue tryptophan 44 is modified to 6'-bromotryptophan.

In terms of tissue distribution, expressed by the venom duct.

The protein resides in the secreted. Functionally, mu-conotoxins block voltage-gated sodium channels. This toxin reversibly blocks voltage-gated sodium channel in cephalopods, with no alteration in the voltage dependence of sodium conductance or on the kinetics of inactivation. This chain is Mu-conotoxin-like Cal 12.1.2a, found in Californiconus californicus (California cone).